The chain runs to 327 residues: DNA repair protein XRCC4 (327 aa).

The segment at 1-211 (MERKVSRISL…QLEKNLKPER (211 aa)) is interaction with IFFO1. Ser-53 bears the Phosphoserine mark. Coiled-coil stretches lie at residues 133-153 (IAEK…LLRD) and 183-213 (LNEK…ERET). Interaction with LIG4 regions lie at residues 179–210 (FILV…LKPE) and 179–211 (FILV…KPER). Phosphoserine is present on Ser-192. A Glycyl lysine isopeptide (Lys-Gly) (interchain with G-Cter in SUMO) cross-link involves residue Lys-208. Tyr-226 carries the post-translational modification Phosphotyrosine. Ser-229 carries the phosphoserine modification. Position 230 is a phosphothreonine (Thr-230). Phosphoserine occurs at positions 249 and 253. Residues 255–327 (DVTDIAPSRK…RNSSPEDIFD (73 aa)) form a disordered region. The Nuclear localization signal motif lies at 263–268 (RKRRHH). Residue Lys-289 forms a Glycyl lysine isopeptide (Lys-Gly) (interchain with G-Cter in ubiquitin) linkage. Phosphoserine is present on residues Ser-294, Ser-295, Ser-308, and Ser-313. The span at 308–327 (SAGNMSLETLRNSSPEDIFD) shows a compositional bias: polar residues. A Phosphothreonine modification is found at Thr-316. Residues Ser-320 and Ser-321 each carry the phosphoserine modification.

It belongs to the XRCC4-XLF family. XRCC4 subfamily. Homodimer and homotetramer in solution. Interacts with NHEJ1/XLF; the interaction is direct and is mediated via a head-to-head interaction between N-terminal head regions. Interacts with LIG4; the LIG4-XRCC4 subcomplex has a 1:2 stoichiometry and XRCC4 is required for LIG4 stability. Component of the core long-range non-homologous end joining (NHEJ) complex (also named DNA-PK complex) composed of PRKDC, LIG4, XRCC4, XRCC6/Ku70, XRCC5/Ku86 and NHEJ1/XLF. Additional component of the NHEJ complex includes PAXX. Following autophosphorylation, PRKDC dissociates from DNA, leading to formation of the short-range NHEJ complex, composed of LIG4, XRCC4, XRCC6/Ku70, XRCC5/Ku86 and NHEJ1/XLF. Interacts with PRKDC; the interaction is direct. Interacts with XRCC6/Ku70; the interaction is direct. Interacts with APTX and APLF. Forms a heterotetramer with IFFO1; the interaction involves LIG4-free XRCC4 and leads to the relocalization of IFFO1 to the sites of DNA damage. Interacts with PNKP; mainly interacts with PNKP when phosphorylated at Thr-230, but is also able to interact at much lower level with PNKP when not unphosphorylated. Interacts with POLL (DNA polymerase lambda). As to quaternary structure, interacts with XKR4; interacts with the processed form of XKR4, which is cleaved by caspase. Post-translationally, phosphorylated by PRKDC at the C-terminus in response to DNA damage; Ser-253 constitutes the main phosphorylation sites. Phosphorylations by PRKDC at the C-terminus of XRCC4 and NHEJ1/XLF are highly redundant and regulate ability of the XRCC4-NHEJ1/XLF subcomplex to bridge DNA. Phosphorylation by PRKDC does not prevent interaction with NHEJ1/XLF but disrupts ability to bridge DNA and promotes detachment from DNA. Phosphorylation at Ser-320 and Ser-321 by PRKDC promotes recognition by the SCF(FBXW7) complex and subsequent ubiquitination via 'Lys-63'-linked ubiquitin. Phosphorylation at Thr-230 by CK2 promotes interaction with PNKP; regulating PNKP activity and localization to DNA damage sites. Phosphorylation by CK2 promotes interaction with APTX. In terms of processing, ubiquitinated at Lys-289 by the SCF(FBXW7) complex via 'Lys-63'-linked ubiquitination, thereby promoting double-strand break repair: the SCF(FBXW7) complex specifically recognizes XRCC4 when phosphorylated at Ser-320 and Ser-321 by PRKDC, and 'Lys-63'-linked ubiquitination facilitates DNA non-homologous end joining (NHEJ) by enhancing association with XRCC5/Ku80 and XRCC6/Ku70. Monoubiquitinated. Undergoes proteolytic processing by caspase-3 (CASP3). This generates the protein XRCC4, C-terminus (XRCC4/C), which translocates to the cytoplasm and activates phospholipid scramblase activity of XKR4, thereby promoting phosphatidylserine exposure on apoptotic cell surface.

The protein resides in the nucleus. Its subcellular location is the chromosome. It localises to the cytoplasm. In terms of biological role, DNA non-homologous end joining (NHEJ) core factor, required for double-strand break repair and V(D)J recombination. Acts as a scaffold protein that regulates recruitment of other proteins to DNA double-strand breaks (DSBs). Associates with NHEJ1/XLF to form alternating helical filaments that bridge DNA and act like a bandage, holding together the broken DNA until it is repaired. The XRCC4-NHEJ1/XLF subcomplex binds to the DNA fragments of a DSB in a highly diffusive manner and robustly bridges two independent DNA molecules, holding the broken DNA fragments in close proximity to one other. The mobility of the bridges ensures that the ends remain accessible for further processing by other repair factors. Plays a key role in the NHEJ ligation step of the broken DNA during DSB repair via direct interaction with DNA ligase IV (LIG4): the LIG4-XRCC4 subcomplex reseals the DNA breaks after the gap filling is completed. XRCC4 stabilizes LIG4, regulates its subcellular localization and enhances LIG4's joining activity. Binding of the LIG4-XRCC4 subcomplex to DNA ends is dependent on the assembly of the DNA-dependent protein kinase complex DNA-PK to these DNA ends. Promotes displacement of PNKP from processed strand break termini. Its function is as follows. Acts as an activator of the phospholipid scramblase activity of XKR4. This form, which is generated upon caspase-3 (CASP3) cleavage, translocates into the cytoplasm and interacts with XKR4, thereby promoting phosphatidylserine scramblase activity of XKR4 and leading to phosphatidylserine exposure on apoptotic cell surface. The sequence is that of DNA repair protein XRCC4 from Cricetulus griseus (Chinese hamster).